The chain runs to 438 residues: Adenylosuccinate synthetase (438 aa).

Residues 13–19 (GDEGKGK) and 41–43 (GHT) each bind GTP. Asp14 functions as the Proton acceptor in the catalytic mechanism. 2 residues coordinate Mg(2+): Asp14 and Gly41. IMP contacts are provided by residues 14–17 (DEGK), 39–42 (NAGH), Thr130, Arg144, Gln225, Thr240, and Arg310. Residue His42 is the Proton donor of the active site. 306–312 (ATTGRLR) contributes to the substrate binding site. GTP is bound by residues Arg312, 338–340 (KLD), and 421–423 (STG).

It belongs to the adenylosuccinate synthetase family. As to quaternary structure, homodimer. It depends on Mg(2+) as a cofactor.

The protein localises to the cytoplasm. The catalysed reaction is IMP + L-aspartate + GTP = N(6)-(1,2-dicarboxyethyl)-AMP + GDP + phosphate + 2 H(+). The protein operates within purine metabolism; AMP biosynthesis via de novo pathway; AMP from IMP: step 1/2. Plays an important role in the de novo pathway of purine nucleotide biosynthesis. Catalyzes the first committed step in the biosynthesis of AMP from IMP. This is Adenylosuccinate synthetase from Aliivibrio fischeri (strain ATCC 700601 / ES114) (Vibrio fischeri).